The chain runs to 1386 residues: YLP motif-containing protein 1 (1386 aa).

Disordered regions lie at residues 1–336 and 517–1068; these read MYPN…EDAR and TSIP…PPGR. Over residues 14–27 the composition is skewed to pro residues; that stretch reads YPPPPVPPPPPPVA. Low complexity-rich tracts occupy residues 31–50 and 59–80; these read ASPGPGYSSSTAPAAPSSSG and LAQLQQLQQMHQKQMQCVLQPH. 5 stretches are compositionally biased toward pro residues: residues 81 to 93, 102 to 114, 148 to 158, 166 to 176, and 184 to 203; these read HLPPPPLPPPPVM, QPPPPPMPPPPGP, PESPPVPPGSY, MPPPQPPPSYY, and YLPPAQPGPSKPQLPPPPSI. Residues 237–259 show a composition bias toward polar residues; that stretch reads STMTPQEQQQYWYRQHLLSLQQR. The span at 260–270 shows a compositional bias: basic residues; sequence TKVHLPGHKKG. Over residues 276–285 the composition is skewed to basic and acidic residues; sequence DVPEPIKEEA. Positions 302–317 are enriched in pro residues; sequence PPLPPPNEEAPPPLSP. Over residues 320–333 the composition is skewed to acidic residues; sequence PQSEDSEDSEDSEE. 3 stretches are compositionally biased toward pro residues: residues 517 to 558, 566 to 603, and 641 to 650; these read TSIP…PPPA, PVLPPPALPGGPPILPLPPLSSATPPPGIPPPGAPQGM, and PPSPYHPPPQ. Over residues 651–667 the composition is skewed to polar residues; the sequence is SEQVNSKPLNKVFSSEQ. K683 is subject to N6-methyllysine. Basic and acidic residues predominate over residues 706–722; that stretch reads RGPREQKEQLQKLKDFG. Residues 746–761 show a composition bias toward pro residues; the sequence is MYPPPGSYRPPPPMGK. Over residues 762-779 the composition is skewed to low complexity; sequence PPGSIVRPSAPPARSSIP. 2 stretches are compositionally biased toward pro residues: residues 781-803 and 848-878; these read TRPPVPIPPPPPPPPPPPPPPPV and PVLPPPPVHSSIPPPGPMPMGMPPMSKPPPV. Residue K894 forms a Glycyl lysine isopeptide (Lys-Gly) (interchain with G-Cter in SUMO2) linkage. 4 stretches are compositionally biased toward basic and acidic residues: residues 904–938, 945–1014, 1023–1033, and 1049–1068; these read ITLRPDPLPERSTFDADHAGQRDRYDRDRDREPYF, TDHR…DRPP, GERRTYPEERM, and RVEKKPESKNVDDILKPPGR. K951 participates in a covalent cross-link: Glycyl lysine isopeptide (Lys-Gly) (interchain with G-Cter in SUMO2). An involved in interaction with PPP1CA region spans residues 1336 to 1343; the sequence is KKRVRWAD.

In terms of assembly, interacts with PPP1CA and NCOA5. Forms a complex with ILF2, ILF3, KHDRBS1, RBMX, NCOA5 and PPP1CA.

The protein localises to the nucleus. It localises to the nucleus speckle. In terms of biological role, plays a role in the reduction of telomerase activity during differentiation of embryonic stem cells by binding to the core promoter of TERT and controlling its down-regulation. The chain is YLP motif-containing protein 1 (Ylpm1) from Mus musculus (Mouse).